Reading from the N-terminus, the 331-residue chain is Taste receptor type 2 member 38 (331 aa).

At Met1 to Ser17 the chain is on the extracellular side. The chain crosses the membrane as a helical span at residues Phe18–Leu38. The Cytoplasmic portion of the chain corresponds to Val39–Asp54. A helical transmembrane segment spans residues Ile55–Ala75. Residues Ile76–Ala94 are Extracellular-facing. A helical transmembrane segment spans residues Ile95 to Leu115. Residues Leu116–Gln142 lie on the Cytoplasmic side of the membrane. The chain crosses the membrane as a helical span at residues Met143–Phe163. Topologically, residues Ser164–Asn198 are extracellular. N-linked (GlcNAc...) asparagine glycosylation occurs at Asn177. Residues Val199 to Leu219 form a helical membrane-spanning segment. At Gly220 to Arg243 the chain is on the cytoplasmic side. Residues Ala244–Ile264 form a helical membrane-spanning segment. Residues Ser265–Gly276 are Extracellular-facing. Residues Gly277–Ile297 traverse the membrane as a helical segment. The Cytoplasmic segment spans residues Ser298–Leu331.

Belongs to the G-protein coupled receptor T2R family. As to expression, expressed in tongue, stomach and duodenum.

Its subcellular location is the membrane. Putative taste receptor which may play a role in the perception of bitterness. This Rattus norvegicus (Rat) protein is Taste receptor type 2 member 38 (Tas2r38).